We begin with the raw amino-acid sequence, 577 residues long: Hemagglutinin-neuraminidase (577 aa).

Residues 1-26 are Intravirion-facing; it reads MDRAVSQVALENDEREAKNTWRLIFR. A helical membrane pass occupies residues 27-47; it reads IAILFLTVVTLAISVASLLYS. Over 48 to 577 the chain is Virion surface; the sequence is MGASTPSDLV…DDGVREARSG (530 aa). Residues 124–152 are important for interaction with fusion/F protein; the sequence is GAPIHDPDYIGGIGKELIVDDASDVTSFY. Residues asparagine 341, asparagine 433, asparagine 481, and asparagine 538 are each glycosylated (N-linked (GlcNAc...) asparagine; by host).

Belongs to the paramyxoviruses hemagglutinin-neuraminidase family. As to quaternary structure, homotetramer; composed of disulfide-linked homodimers. Interacts with F protein trimer. Interacts with host CG-1B; this interaction inhibits viral adsorption and replication rather than internalization.

The protein localises to the virion membrane. The protein resides in the host cell membrane. The catalysed reaction is Hydrolysis of alpha-(2-&gt;3)-, alpha-(2-&gt;6)-, alpha-(2-&gt;8)- glycosidic linkages of terminal sialic acid residues in oligosaccharides, glycoproteins, glycolipids, colominic acid and synthetic substrates.. Its function is as follows. Mediates the viral entry into the host cell together with fusion/F protein. Attaches the virus to sialic acid-containing cell receptors and thereby initiates infection. Binding of HN protein to the receptor induces a conformational change that allows the F protein to trigger virion/cell membranes fusion. In terms of biological role, neuraminidase activity ensures the efficient spread of the virus by dissociating the mature virions from the neuraminic acid containing glycoproteins. The sequence is that of Hemagglutinin-neuraminidase (HN) from Gallus gallus (Chicken).